The sequence spans 406 residues: Imidazolonepropionase (406 aa).

Fe(3+) contacts are provided by His-72 and His-74. 2 residues coordinate Zn(2+): His-72 and His-74. 3 residues coordinate 4-imidazolone-5-propanoate: Arg-81, Tyr-144, and His-177. Tyr-144 contacts N-formimidoyl-L-glutamate. His-242 is a binding site for Fe(3+). Zn(2+) is bound at residue His-242. Gln-245 serves as a coordination point for 4-imidazolone-5-propanoate. Asp-317 contributes to the Fe(3+) binding site. Asp-317 lines the Zn(2+) pocket. N-formimidoyl-L-glutamate is bound by residues Asn-319 and Gly-321. Residue Thr-322 participates in 4-imidazolone-5-propanoate binding.

This sequence belongs to the metallo-dependent hydrolases superfamily. HutI family. It depends on Zn(2+) as a cofactor. The cofactor is Fe(3+).

The protein resides in the cytoplasm. It carries out the reaction 4-imidazolone-5-propanoate + H2O = N-formimidoyl-L-glutamate. It participates in amino-acid degradation; L-histidine degradation into L-glutamate; N-formimidoyl-L-glutamate from L-histidine: step 3/3. In terms of biological role, catalyzes the hydrolytic cleavage of the carbon-nitrogen bond in imidazolone-5-propanoate to yield N-formimidoyl-L-glutamate. It is the third step in the universal histidine degradation pathway. The protein is Imidazolonepropionase of Yersinia pestis bv. Antiqua (strain Antiqua).